The sequence spans 295 residues: Probable peptidyl-prolyl cis-trans isomerase B (295 aa).

2 disordered regions span residues 105–128 (SADK…PATV) and 274–295 (IASG…LRLD). The PPIase cyclophilin-type domain occupies 126 to 294 (ATVSASMATN…TEVTIESLRL (169 aa)).

The protein belongs to the cyclophilin-type PPIase family.

The enzyme catalyses [protein]-peptidylproline (omega=180) = [protein]-peptidylproline (omega=0). Functionally, PPIases accelerate the folding of proteins. It catalyzes the cis-trans isomerization of proline imidic peptide bonds in oligopeptides. The sequence is that of Probable peptidyl-prolyl cis-trans isomerase B (ppiB) from Mycobacterium leprae (strain TN).